A 409-amino-acid chain; its full sequence is Histone acetyltransferase type B catalytic subunit (409 aa).

Interaction with histone H4 N-terminus regions lie at residues 53-55 and 206-208; these read DSE and YNY. Acetyl-CoA is bound by residues 231–233 and 238–244; these read FIV and QGLKLGG. E266 serves as the catalytic Proton donor/acceptor.

This sequence belongs to the HAT1 family. As to quaternary structure, component of the HAT-B complex composed of at least HAT1 and HAT2. The HAT-B complex binds to histone H4 tail.

Its subcellular location is the cytoplasm. It is found in the nucleus. It catalyses the reaction L-lysyl-[protein] + acetyl-CoA = N(6)-acetyl-L-lysyl-[protein] + CoA + H(+). In terms of biological role, catalytic component of the histone acetylase B (HAT-B) complex. Acetylates 'Lys-12' of histone H4 which is required for telomeric silencing. Has intrinsic substrate specificity that modifies lysine in recognition sequence GXGKXG. Involved in DNA double-strand break repair. The protein is Histone acetyltransferase type B catalytic subunit (HAT1) of Debaryomyces hansenii (strain ATCC 36239 / CBS 767 / BCRC 21394 / JCM 1990 / NBRC 0083 / IGC 2968) (Yeast).